Reading from the N-terminus, the 341-residue chain is MQNSSPTTYNPMKIISLFSGCGGLDLGFEKAGFEIPAANEYDKTIWATFKANHPKTHLIEGDIRKIKEEDFPEEIDGIIGGPPCQSWSEAGALRGIDDARGQLFFDYIRILKSKQPKFFLAENVSGMLANRHNGAVQNLLKMFDGCGYDVTLTMANAKDYGVAQERKRVFYIGFRKDLEIKFSFPKGSTVEDKDKITLKDVIWDLQDTAVPSAPQNKTNPDAVNNNEYFTGSFSPIFMSRNRVKAWDEQGFTVQASGRQCQLHPQAPKMEKHGANDYRFAAGKETLYRRMTVREVARIQGFPDNFKFIYQNVNDAYKMIGNAVPVNLAYEIAAAIKKTLER.

An SAM-dependent MTase C5-type domain is found at 12-341 (MKIISLFSGC…AAAIKKTLER (330 aa)). Cys84 is a catalytic residue.

It belongs to the class I-like SAM-binding methyltransferase superfamily. C5-methyltransferase family.

It carries out the reaction a 2'-deoxycytidine in DNA + S-adenosyl-L-methionine = a 5-methyl-2'-deoxycytidine in DNA + S-adenosyl-L-homocysteine + H(+). A methylase that recognizes the double-stranded sequence 5'-GGCC-3', methylates C-3 on both strands, and protects the DNA from cleavage by the NgoPII endonuclease. In Neisseria gonorrhoeae, this protein is Type II methyltransferase M.NgoPII (ngoPIIM).